Consider the following 1538-residue polypeptide: Myosin-9 (1538 aa).

Residues 16–65 (SIGSHVWFEDPEVAWIDGEVEKINGQEVVIQATTGKKVTAKLSKIYPKDV) form the Myosin N-terminal SH3-like domain. In terms of domain architecture, Myosin motor spans 70-740 (GGVDDMTKLS…QMAELDARRA (671 aa)). Residues 164–171 (GESGAGKT) and 217–225 (NNNSSRFGK) each bind ATP. 4 actin-binding regions span residues 503-537 (LIEK…YQTF), 539-562 (THKR…AGEV), 597-621 (FPPL…KLQL), and 621-643 (LQQL…KPNN). IQ domains lie at 743–772 (LSSA…ATIS), 766–795 (LRKA…EAAA), 791–820 (REAA…ASLV), 814–843 (LHVA…TKAA), 839–868 (QTKA…GVVL), and 862–891 (LKNG…AARE). Positions 892–1064 (TGALKEAKDM…VLRQQAVSMA (173 aa)) form a coiled coil. Residues 1017 to 1032 (SLEDKKKKLEETEKKG) are compositionally biased toward basic and acidic residues. Disordered regions lie at residues 1017-1041 (SLED…SLTR) and 1098-1121 (SHSI…NEKQ). Residues 1168 to 1481 (DRIIQTIGHA…IANMRVLMTE (314 aa)) enclose the Dilute domain.

The protein belongs to the TRAFAC class myosin-kinesin ATPase superfamily. Myosin family. Plant myosin class XI subfamily. Homodimer.

In terms of biological role, myosin heavy chain that is required for the cell cycle-regulated transport of various organelles and proteins for their segregation. Functions by binding with its tail domain to receptor proteins on organelles and exerting force with its N-terminal motor domain against actin filaments, thereby transporting its cargo along polarized actin cables. Involved in trafficking of Golgi stacks and mitochondria. In Arabidopsis thaliana (Mouse-ear cress), this protein is Myosin-9 (XI-C).